Here is a 535-residue protein sequence, read N- to C-terminus: NAD(P)H-quinone oxidoreductase chain 4 2 (535 aa).

A run of 14 helical transmembrane segments spans residues 9-29, 51-71, 106-126, 130-150, 152-172, 184-204, 227-247, 258-278, 290-310, 326-346, 347-367, 399-419, 432-452, and 479-499; these read FPWL…IPLI, WFAL…FYVG, LILL…PVTL, LFYF…AVQD, LLFF…LSIW, FILY…AMAF, LLLY…FPLH, TAPV…YALM, LYFA…AALT, ISHM…GMSG, AMLQ…LVGA, LASL…VFIG, LVVV…LLSM, and VFII…PKLV.

This sequence belongs to the complex I subunit 4 family.

Its subcellular location is the cellular thylakoid membrane. It catalyses the reaction a plastoquinone + NADH + (n+1) H(+)(in) = a plastoquinol + NAD(+) + n H(+)(out). It carries out the reaction a plastoquinone + NADPH + (n+1) H(+)(in) = a plastoquinol + NADP(+) + n H(+)(out). In terms of biological role, NDH-1 shuttles electrons from NAD(P)H, via FMN and iron-sulfur (Fe-S) centers, to quinones in the respiratory chain. The immediate electron acceptor for the enzyme in this species is believed to be plastoquinone. Couples the redox reaction to proton translocation (for every two electrons transferred, four hydrogen ions are translocated across the cytoplasmic membrane), and thus conserves the redox energy in a proton gradient. In Synechococcus sp. (strain JA-3-3Ab) (Cyanobacteria bacterium Yellowstone A-Prime), this protein is NAD(P)H-quinone oxidoreductase chain 4 2.